The following is a 360-amino-acid chain: Phospho-N-acetylmuramoyl-pentapeptide-transferase (360 aa).

10 helical membrane-spanning segments follow: residues 19-39 (LTYLTSRIILGALTALLLSIF), 73-93 (TMGGALIIFSITVSMLCWADL), 95-115 (SVYTWLALFVLLGFGAVGWTD), 136-156 (YLSLVALLTALWLYFLADTPI), 173-193 (GILFIPFVYLVLTGASNAVNL), 199-219 (GLAIMPVVLVSGGLCIFAYLS), 233-253 (IAGAGEMAIFCAAIAGAGLGF), 263-283 (VFMGDVGALSLGAALATVAVV), 288-308 (LAFAVMGGVFVAEALSVMIQV), and 338-358 (VTIRFWIITVVLVLVGLSTLK).

Belongs to the glycosyltransferase 4 family. MraY subfamily. Mg(2+) serves as cofactor.

The protein resides in the cell inner membrane. The catalysed reaction is UDP-N-acetyl-alpha-D-muramoyl-L-alanyl-gamma-D-glutamyl-meso-2,6-diaminopimeloyl-D-alanyl-D-alanine + di-trans,octa-cis-undecaprenyl phosphate = di-trans,octa-cis-undecaprenyl diphospho-N-acetyl-alpha-D-muramoyl-L-alanyl-D-glutamyl-meso-2,6-diaminopimeloyl-D-alanyl-D-alanine + UMP. Its pathway is cell wall biogenesis; peptidoglycan biosynthesis. Its function is as follows. Catalyzes the initial step of the lipid cycle reactions in the biosynthesis of the cell wall peptidoglycan: transfers peptidoglycan precursor phospho-MurNAc-pentapeptide from UDP-MurNAc-pentapeptide onto the lipid carrier undecaprenyl phosphate, yielding undecaprenyl-pyrophosphoryl-MurNAc-pentapeptide, known as lipid I. The sequence is that of Phospho-N-acetylmuramoyl-pentapeptide-transferase from Dichelobacter nodosus (strain VCS1703A).